Consider the following 475-residue polypeptide: Cytosolic non-specific dipeptidase (475 aa).

S58 bears the Phosphoserine mark. H99 lines the Mn(2+) pocket. The active site involves D101. D132 is a Mn(2+) binding site. The Proton acceptor role is filled by E166. Substrate-binding positions include 166 to 167 (EE), D195, and H228. Mn(2+) contacts are provided by E167 and D195. Position 299 is a phosphoserine (S299). T330, R343, S417, and H445 together coordinate substrate. H445 is a binding site for Mn(2+).

Belongs to the peptidase M20A family. Homodimer. Mn(2+) is required as a cofactor. Highly expressed in the parafascicular nucleus of the thalamus, tuberomammillary nucleus of the hypothalamus and the mitral cell layer of the olfactory bulb.

It localises to the cytoplasm. The catalysed reaction is Hydrolysis of dipeptides, preferentially hydrophobic dipeptides including prolyl amino acids.. It catalyses the reaction L-threonyl-L-threonine + H2O = 2 L-threonine. The enzyme catalyses L-threonyl-L-serine + H2O = L-threonine + L-serine. It carries out the reaction L-seryl-L-threonine + H2O = L-threonine + L-serine. The catalysed reaction is L-cysteinylglycine + H2O = L-cysteine + glycine. It catalyses the reaction L-alanyl-L-cysteine + H2O = L-cysteine + L-alanine. The enzyme catalyses (S)-lactate + L-phenylalanine = N-[(S)-lactoyl]-L-phenylalanine + H2O. Inhibited by bestatin. Its function is as follows. Catalyzes the peptide bond hydrolysis in dipeptides, displaying a non-redundant activity toward threonyl dipeptides. Mediates threonyl dipeptide catabolism in a tissue-specific way. Has high dipeptidase activity toward cysteinylglycine, an intermediate metabolite in glutathione metabolism. Metabolizes N-lactoyl-amino acids, both through hydrolysis to form lactic acid and amino acids, as well as through their formation by reverse proteolysis. Plays a role in the regulation of cell cycle arrest and apoptosis. The chain is Cytosolic non-specific dipeptidase (Cndp2) from Mus musculus (Mouse).